Here is a 517-residue protein sequence, read N- to C-terminus: UDP-N-acetylmuramyl-tripeptide synthetase (517 aa).

Thr-48 provides a ligand contact to UDP-N-acetyl-alpha-D-muramoyl-L-alanyl-D-glutamate. Position 125-131 (125-131 (GTKGKTT)) interacts with ATP. Residues 169 to 170 (TT), Ser-196, and Arg-204 each bind UDP-N-acetyl-alpha-D-muramoyl-L-alanyl-D-glutamate. An N6-carboxylysine modification is found at Lys-238.

It belongs to the MurCDEF family. MurE subfamily. Post-translationally, carboxylation is probably crucial for Mg(2+) binding and, consequently, for the gamma-phosphate positioning of ATP.

The protein localises to the cytoplasm. It functions in the pathway cell wall biogenesis; peptidoglycan biosynthesis. Its function is as follows. Catalyzes the addition of an amino acid to the nucleotide precursor UDP-N-acetylmuramoyl-L-alanyl-D-glutamate (UMAG) in the biosynthesis of bacterial cell-wall peptidoglycan. The protein is UDP-N-acetylmuramyl-tripeptide synthetase of Bifidobacterium longum (strain NCC 2705).